Here is a 318-residue protein sequence, read N- to C-terminus: NADH-ubiquinone oxidoreductase chain 1 (318 aa).

Helical transmembrane passes span 2-22 (FMAN…FLTL), 69-89 (MLYL…WTPL), 98-118 (FNLG…SILW), 140-160 (ISYE…SGSF), 171-191 (HSWL…STLA), 222-242 (LFFM…TTIF), 253-273 (ETYS…FLWI), and 285-305 (LMHL…MWYI).

Belongs to the complex I subunit 1 family. As to quaternary structure, core subunit of respiratory chain NADH dehydrogenase (Complex I) which is composed of 45 different subunits.

Its subcellular location is the mitochondrion inner membrane. It catalyses the reaction a ubiquinone + NADH + 5 H(+)(in) = a ubiquinol + NAD(+) + 4 H(+)(out). Functionally, core subunit of the mitochondrial membrane respiratory chain NADH dehydrogenase (Complex I) which catalyzes electron transfer from NADH through the respiratory chain, using ubiquinone as an electron acceptor. Essential for the catalytic activity and assembly of complex I. The chain is NADH-ubiquinone oxidoreductase chain 1 (MT-ND1) from Saguinus leucopus (Silvery-brown bare-face tamarin).